The chain runs to 151 residues: uncharacterized protein (151 aa).

4 helical membrane passes run 8 to 28 (GIGS…EFFE), 60 to 80 (WHVA…GVLT), 82 to 102 (FSAL…HADS), and 113 to 133 (LPLI…GKLS).

This sequence belongs to the DoxX family.

It is found in the cell membrane. This is an uncharacterized protein from Haemophilus influenzae (strain ATCC 51907 / DSM 11121 / KW20 / Rd).